The sequence spans 114 residues: Probable 4-amino-4-deoxy-L-arabinose-phosphoundecaprenol flippase subunit ArnE (114 aa).

Helical transmembrane passes span 41–61 (GWLWLALFSLGLGLLVWLLVL) and 68–88 (VAYPMLSLNFVFITLIAHFVF). The EamA domain occupies 43–112 (LWLALFSLGL…VIGGVLLLSR (70 aa)).

It belongs to the ArnE family. In terms of assembly, heterodimer of ArnE and ArnF.

Its subcellular location is the cell inner membrane. It participates in bacterial outer membrane biogenesis; lipopolysaccharide biosynthesis. Functionally, translocates 4-amino-4-deoxy-L-arabinose-phosphoundecaprenol (alpha-L-Ara4N-phosphoundecaprenol) from the cytoplasmic to the periplasmic side of the inner membrane. The chain is Probable 4-amino-4-deoxy-L-arabinose-phosphoundecaprenol flippase subunit ArnE from Pseudomonas fluorescens (strain ATCC BAA-477 / NRRL B-23932 / Pf-5).